A 142-amino-acid chain; its full sequence is uncharacterized protein (142 aa).

The span at Met-1 to Ser-14 shows a compositional bias: basic residues. Positions Met-1–Lys-40 are disordered. Residues Lys-16 to Pro-28 show a composition bias toward low complexity.

This is an uncharacterized protein from Aquifex aeolicus (strain VF5).